A 473-amino-acid chain; its full sequence is 3-isopropylmalate dehydratase large subunit (473 aa).

The [4Fe-4S] cluster site is built by C354, C414, and C417.

This sequence belongs to the aconitase/IPM isomerase family. LeuC type 1 subfamily. In terms of assembly, heterodimer of LeuC and LeuD. Requires [4Fe-4S] cluster as cofactor.

It carries out the reaction (2R,3S)-3-isopropylmalate = (2S)-2-isopropylmalate. It functions in the pathway amino-acid biosynthesis; L-leucine biosynthesis; L-leucine from 3-methyl-2-oxobutanoate: step 2/4. In terms of biological role, catalyzes the isomerization between 2-isopropylmalate and 3-isopropylmalate, via the formation of 2-isopropylmaleate. This is 3-isopropylmalate dehydratase large subunit from Mycobacterium marinum (strain ATCC BAA-535 / M).